We begin with the raw amino-acid sequence, 115 residues long: Cyclin-dependent kinase 2-associated protein 1 (115 aa).

The interaction with CDK2AP2 stretch occupies residues 20–25 (GSVHSP). The residue at position 46 (S46) is a Phosphoserine; by IKKE.

Belongs to the CDK2AP family. In terms of assembly, homodimer. Component of the nucleosome remodeling and deacetylase (NuRD) repressor complex, composed of core proteins MTA1, MTA2, MTA3, RBBP4, RBBP7, HDAC1, HDAC2, MBD2, MBD3, and peripherally associated proteins CDK2AP1, CDK2AP2, GATAD2A, GATAD2B, CHD3, CHD4 and CHD5. The exact stoichiometry of the NuRD complex is unknown, and some subunits such as MBD2 and MBD3, GATAD2A and GATAD2B, and CHD3, CHD4 and CHD5 define mutually exclusive NuRD complexes. Interacts with monomeric unphosphorylated CDK2. Interacts with CDK2AP2. Interacts with GATAD2A. Interacts with HDAC1. Interacts with HDAC2. Interacts with MBD2. Interacts with MBD3. Interacts with RBBP4. Interacts with RBBP7. In terms of processing, phosphorylated in vitro by IKBKE at Ser-46.

The protein resides in the nucleus. It is found in the chromosome. Its function is as follows. Inhibitor of cyclin-dependent kinase CDK2. Also acts as a component of the histone deacetylase NuRD complex which participates in the remodeling of chromatin. The polypeptide is Cyclin-dependent kinase 2-associated protein 1 (CDK2AP1) (Homo sapiens (Human)).